Consider the following 309-residue polypeptide: Ornithine carbamoyltransferase (309 aa).

Residues 51–54 (STRT), glutamine 78, arginine 102, and 129–132 (HPCQ) each bind carbamoyl phosphate. Residues asparagine 161, aspartate 225, and 229–230 (SM) contribute to the L-ornithine site. Residues 265 to 266 (CL) and arginine 293 contribute to the carbamoyl phosphate site.

This sequence belongs to the aspartate/ornithine carbamoyltransferase superfamily. OTCase family.

The protein localises to the cytoplasm. The enzyme catalyses carbamoyl phosphate + L-ornithine = L-citrulline + phosphate + H(+). It participates in amino-acid biosynthesis; L-arginine biosynthesis; L-arginine from L-ornithine and carbamoyl phosphate: step 1/3. Reversibly catalyzes the transfer of the carbamoyl group from carbamoyl phosphate (CP) to the N(epsilon) atom of ornithine (ORN) to produce L-citrulline. The sequence is that of Ornithine carbamoyltransferase from Mycolicibacterium paratuberculosis (strain ATCC BAA-968 / K-10) (Mycobacterium paratuberculosis).